Consider the following 249-residue polypeptide: Pyridoxine 5'-phosphate synthase (249 aa).

Residue asparagine 10 coordinates 3-amino-2-oxopropyl phosphate. Aspartate 12 to histidine 13 contacts 1-deoxy-D-xylulose 5-phosphate. Arginine 21 provides a ligand contact to 3-amino-2-oxopropyl phosphate. The Proton acceptor role is filled by histidine 46. 2 residues coordinate 1-deoxy-D-xylulose 5-phosphate: arginine 48 and histidine 53. The active-site Proton acceptor is the glutamate 73. Threonine 103 provides a ligand contact to 1-deoxy-D-xylulose 5-phosphate. Histidine 194 (proton donor) is an active-site residue. Residues glycine 195 and glycine 216–histidine 217 contribute to the 3-amino-2-oxopropyl phosphate site.

Belongs to the PNP synthase family. Homooctamer; tetramer of dimers.

Its subcellular location is the cytoplasm. The catalysed reaction is 3-amino-2-oxopropyl phosphate + 1-deoxy-D-xylulose 5-phosphate = pyridoxine 5'-phosphate + phosphate + 2 H2O + H(+). It participates in cofactor biosynthesis; pyridoxine 5'-phosphate biosynthesis; pyridoxine 5'-phosphate from D-erythrose 4-phosphate: step 5/5. Its function is as follows. Catalyzes the complicated ring closure reaction between the two acyclic compounds 1-deoxy-D-xylulose-5-phosphate (DXP) and 3-amino-2-oxopropyl phosphate (1-amino-acetone-3-phosphate or AAP) to form pyridoxine 5'-phosphate (PNP) and inorganic phosphate. The sequence is that of Pyridoxine 5'-phosphate synthase from Rhodospirillum rubrum (strain ATCC 11170 / ATH 1.1.1 / DSM 467 / LMG 4362 / NCIMB 8255 / S1).